A 951-amino-acid chain; its full sequence is Valine--tRNA ligase (951 aa).

A 'HIGH' region motif is present at residues 42 to 52; the sequence is PNVTGSLHMGH. The short motif at 554–558 is the 'KMSKS' region element; it reads KMSKS. K557 provides a ligand contact to ATP. Residues 882–944 are a coiled coil; sequence LINKDDELAR…AEAKAKLIEQ (63 aa).

Belongs to the class-I aminoacyl-tRNA synthetase family. ValS type 1 subfamily. As to quaternary structure, monomer.

The protein resides in the cytoplasm. The enzyme catalyses tRNA(Val) + L-valine + ATP = L-valyl-tRNA(Val) + AMP + diphosphate. In terms of biological role, catalyzes the attachment of valine to tRNA(Val). As ValRS can inadvertently accommodate and process structurally similar amino acids such as threonine, to avoid such errors, it has a 'posttransfer' editing activity that hydrolyzes mischarged Thr-tRNA(Val) in a tRNA-dependent manner. This is Valine--tRNA ligase from Salmonella choleraesuis (strain SC-B67).